The sequence spans 241 residues: Nopaline transport system permease protein NocM (241 aa).

The region spanning 17 to 215 (VPTTLTLAFI…FITFVVSRLV (199 aa)) is the ABC transmembrane type-1 domain. Helical transmembrane passes span 21 to 41 (LTLAFISLLIGFVVSVPVALM), 52 to 72 (LAYGYVYIIRSTPLLVQMFLI), 95 to 115 (PWFCAILALALNTAAYTSEII), 161 to 181 (VMLIIKSTSLASTITIVEVTG), and 191 to 211 (YSPVEVFIVAGAIYLFITFVV).

It belongs to the binding-protein-dependent transport system permease family. HisMQ subfamily.

It is found in the cell inner membrane. Component of the nopaline active transport system probably consisting of four subunits: Q, M, P and T. This system is also capable of transporting octopine provided that catabolic functions are induced with nopaline. This is Nopaline transport system permease protein NocM (nocM) from Agrobacterium fabrum (strain C58 / ATCC 33970) (Agrobacterium tumefaciens (strain C58)).